The primary structure comprises 383 residues: DNA-directed RNA polymerase subunit alpha (383 aa).

Residues 1–240 form an alpha N-terminal domain (alpha-NTD) region; that stretch reads MEKKTGLIQF…NLFHQISPPL (240 aa). Residues 306-383 are alpha C-terminal domain (alpha-CTD); sequence IDKQMNDSVN…RFNMELLPTK (78 aa).

It belongs to the RNA polymerase alpha chain family. In plastids the minimal PEP RNA polymerase catalytic core is composed of four subunits: alpha, beta, beta', and beta''. When a (nuclear-encoded) sigma factor is associated with the core the holoenzyme is formed, which can initiate transcription.

It localises to the plastid. Its subcellular location is the chloroplast. It carries out the reaction RNA(n) + a ribonucleoside 5'-triphosphate = RNA(n+1) + diphosphate. Functionally, DNA-dependent RNA polymerase catalyzes the transcription of DNA into RNA using the four ribonucleoside triphosphates as substrates. This Staurastrum punctulatum (Green alga) protein is DNA-directed RNA polymerase subunit alpha.